A 179-amino-acid chain; its full sequence is ATP synthase subunit delta (179 aa).

Belongs to the ATPase delta chain family. As to quaternary structure, F-type ATPases have 2 components, F(1) - the catalytic core - and F(0) - the membrane proton channel. F(1) has five subunits: alpha(3), beta(3), gamma(1), delta(1), epsilon(1). F(0) has three main subunits: a(1), b(2) and c(10-14). The alpha and beta chains form an alternating ring which encloses part of the gamma chain. F(1) is attached to F(0) by a central stalk formed by the gamma and epsilon chains, while a peripheral stalk is formed by the delta and b chains.

The protein resides in the cell membrane. Its function is as follows. F(1)F(0) ATP synthase produces ATP from ADP in the presence of a proton or sodium gradient. F-type ATPases consist of two structural domains, F(1) containing the extramembraneous catalytic core and F(0) containing the membrane proton channel, linked together by a central stalk and a peripheral stalk. During catalysis, ATP synthesis in the catalytic domain of F(1) is coupled via a rotary mechanism of the central stalk subunits to proton translocation. Functionally, this protein is part of the stalk that links CF(0) to CF(1). It either transmits conformational changes from CF(0) to CF(1) or is implicated in proton conduction. The chain is ATP synthase subunit delta from Listeria welshimeri serovar 6b (strain ATCC 35897 / DSM 20650 / CCUG 15529 / CIP 8149 / NCTC 11857 / SLCC 5334 / V8).